The following is a 525-amino-acid chain: Keratin, type II cytoskeletal 4 (525 aa).

The head stretch occupies residues 1-145 (MIARQSSVRG…DPEIQKIRTA (145 aa)). At Arg13 the chain carries Omega-N-methylarginine. A coil 1A region spans residues 146-181 (EREQIKTLNNKFASFIDKVRFLEQQNKVLETKWNLL). The IF rod domain occupies 146–459 (EREQIKTLNN…KLLEGEECRM (314 aa)). Positions 182–200 (QQQTTTTSPKSLDPFFETY) are linker 1. The interval 201 to 292 (INALRKNLDT…VLYEAELAQM (92 aa)) is coil 1B. Residues 293-316 (QTHVSDTSVVLSMDNNRNLDLDGI) are linker 12. A coil 2 region spans residues 317–455 (IAEVRAQYED…ATYRKLLEGE (139 aa)). The tract at residues 456 to 524 (ECRMSGECKS…SSATITKRSP (69 aa)) is tail.

It belongs to the intermediate filament family. Heterotetramer of two type I and two type II keratins. Keratin-4 is generally associated with keratin-13. Expressed in the dorsal and ventral epithelium of the tongue. Highest expression levels are detected in the suprabasal layer with low levels detected in the basal cell layer. Within the suprabasal layer expression is highest in the spinous cells, decreases in the granular cells and is not detected in the stratum corneum.

In Mus musculus (Mouse), this protein is Keratin, type II cytoskeletal 4 (Krt4).